The following is a 1232-amino-acid chain: Pyruvate:ferredoxin oxidoreductase (1232 aa).

T31 contributes to the pyruvate binding site. E64 contacts thiamine diphosphate. Pyruvate is bound at residue R114. CoA contacts are provided by residues 427–431, K459, N560, and N602; that span reads ADGTV. 2 consecutive 4Fe-4S ferredoxin-type domains span residues 680 to 709 and 736 to 767; these read NVPQ…PVLA and FRIQ…MQPL. Residues C689, C692, C695, C699, C745, C748, C751, C755, C812, and C815 each coordinate [4Fe-4S] cluster. Thiamine diphosphate contacts are provided by residues E817, C840, and 962–965; that span reads GDGW. Position 840 (C840) interacts with [4Fe-4S] cluster. D963 contacts Mg(2+). Residues D983 and N985 each contribute to the Ca(2+) site. Residues T991 and V993 each coordinate Mg(2+). 991 to 996 provides a ligand contact to thiamine diphosphate; that stretch reads TEVYSN. Residues A1056, F1059, G1061, and S1063 each coordinate Ca(2+). C1071 lines the [4Fe-4S] cluster pocket. Residues C1195 and C1212 are joined by a disulfide bond. The disordered stretch occupies residues 1197–1232; that stretch reads RDDTPMMARPDSGEACDQNRAGTSEQQGDLSKRTKK. Positions 1216–1225 are enriched in polar residues; sequence RAGTSEQQGD.

It belongs to the pyruvate:ferredoxin/flavodoxin oxidoreductase family. As to quaternary structure, homodimer. Requires [4Fe-4S] cluster as cofactor. Thiamine diphosphate is required as a cofactor. It depends on Mg(2+) as a cofactor.

The protein resides in the cytoplasm. It carries out the reaction 2 oxidized [2Fe-2S]-[ferredoxin] + pyruvate + CoA = 2 reduced [2Fe-2S]-[ferredoxin] + acetyl-CoA + CO2 + H(+). Catalyzes the ferredoxin-dependent oxidative decarboxylation of pyruvate. Required for the transfer of electrons from pyruvate to ferredoxin. Ferredoxin I and ferredoxin II, which are single 4Fe-4S cluster ferredoxins are the most effective electron carriers of POR. The chain is Pyruvate:ferredoxin oxidoreductase from Desulfocurvibacter africanus (Desulfovibrio africanus).